Consider the following 653-residue polypeptide: Transcription factor Ken 1 (653 aa).

The BTB domain occupies 35 to 103 (TDLLLICDGK…LYSGQVYVRS (69 aa)). 4 disordered regions span residues 126–215 (NSDG…DRDR), 234–305 (NNHP…SDDA), 429–451 (LSNN…PPSA), and 512–534 (ELSA…GSGS). Residues 145-157 (NRNTEGITGSSVV) are compositionally biased toward polar residues. Basic residues predominate over residues 251-272 (GHHHHHHHHHHHRQLHQIKTRS). Residues 286–299 (SDPVNLSIVKQQQD) are compositionally biased toward polar residues. The span at 430–444 (SNNNNSSSNNNNNNN) shows a compositional bias: low complexity. Gly residues predominate over residues 520 to 534 (AGGGGGGSGGNGSGS). C2H2-type zinc fingers lie at residues 555-577 (YRCE…LRVH), 583-606 (FACR…CSVH), and 619-641 (YTCC…LSGH).

The protein localises to the nucleus. Functionally, transcription factor required for terminalia development. Negative regulator of the JAK/STAT pathway: represses JAK/STAT-dependent expression of ventral veins lacking (vvl) in the posterior spiracles. In Culex quinquefasciatus (Southern house mosquito), this protein is Transcription factor Ken 1.